We begin with the raw amino-acid sequence, 281 residues long: NADPH-dependent 7-cyano-7-deazaguanine reductase (281 aa).

87–89 (VES) serves as a coordination point for substrate. 89-90 (SK) lines the NADPH pocket. The Thioimide intermediate role is filled by Cys-188. Residue Asp-195 is the Proton donor of the active site. 227-228 (HE) serves as a coordination point for substrate. 256–257 (RG) contributes to the NADPH binding site.

The protein belongs to the GTP cyclohydrolase I family. QueF type 2 subfamily. As to quaternary structure, homodimer.

It localises to the cytoplasm. It carries out the reaction 7-aminomethyl-7-carbaguanine + 2 NADP(+) = 7-cyano-7-deazaguanine + 2 NADPH + 3 H(+). Its pathway is tRNA modification; tRNA-queuosine biosynthesis. In terms of biological role, catalyzes the NADPH-dependent reduction of 7-cyano-7-deazaguanine (preQ0) to 7-aminomethyl-7-deazaguanine (preQ1). The polypeptide is NADPH-dependent 7-cyano-7-deazaguanine reductase (Aliivibrio salmonicida (strain LFI1238) (Vibrio salmonicida (strain LFI1238))).